The sequence spans 150 residues: SsrA-binding protein (150 aa).

This sequence belongs to the SmpB family.

The protein localises to the cytoplasm. Functionally, required for rescue of stalled ribosomes mediated by trans-translation. Binds to transfer-messenger RNA (tmRNA), required for stable association of tmRNA with ribosomes. tmRNA and SmpB together mimic tRNA shape, replacing the anticodon stem-loop with SmpB. tmRNA is encoded by the ssrA gene; the 2 termini fold to resemble tRNA(Ala) and it encodes a 'tag peptide', a short internal open reading frame. During trans-translation Ala-aminoacylated tmRNA acts like a tRNA, entering the A-site of stalled ribosomes, displacing the stalled mRNA. The ribosome then switches to translate the ORF on the tmRNA; the nascent peptide is terminated with the 'tag peptide' encoded by the tmRNA and targeted for degradation. The ribosome is freed to recommence translation, which seems to be the essential function of trans-translation. In Thermotoga maritima (strain ATCC 43589 / DSM 3109 / JCM 10099 / NBRC 100826 / MSB8), this protein is SsrA-binding protein.